A 357-amino-acid polypeptide reads, in one-letter code: Non-structural protein NS2 (357 aa).

Disordered regions lie at residues 169–191 and 229–266; these read PRLQ…DEAK and DERD…HPKT. A compositionally biased stretch (basic and acidic residues) spans 233–249; sequence EGDRDERGDEEQVKTLS. A compositionally biased stretch (acidic residues) spans 250–260; sequence DDDDQGEDASD.

This sequence belongs to the orbivirus non-structural protein NS2 family.

Single-stranded RNA-binding protein. The protein is Non-structural protein NS2 (Segment-8) of Antilocapra americana (Pronghorn).